Consider the following 102-residue polypeptide: Gonadotropin subunit beta-1 (102 aa).

5 disulfides stabilise this stretch: cysteine 8-cysteine 51, cysteine 20-cysteine 65, cysteine 31-cysteine 77, cysteine 35-cysteine 79, and cysteine 82-cysteine 89. N-linked (GlcNAc...) asparagine glycosylation occurs at asparagine 12.

Belongs to the glycoprotein hormones subunit beta family. In terms of assembly, heterodimer of an alpha and a beta chain.

It localises to the secreted. Involved in gametogenesis and steroidogenesis. This is Gonadotropin subunit beta-1 (cgba) from Thunnus obesus (Bigeye tuna).